The primary structure comprises 262 residues: tRNA pseudouridine synthase A (262 aa).

The active-site Nucleophile is aspartate 51. Tyrosine 109 provides a ligand contact to substrate.

This sequence belongs to the tRNA pseudouridine synthase TruA family. As to quaternary structure, homodimer.

It catalyses the reaction uridine(38/39/40) in tRNA = pseudouridine(38/39/40) in tRNA. Functionally, formation of pseudouridine at positions 38, 39 and 40 in the anticodon stem and loop of transfer RNAs. The chain is tRNA pseudouridine synthase A from Glaesserella parasuis serovar 5 (strain SH0165) (Haemophilus parasuis).